Consider the following 318-residue polypeptide: Putative 2-hydroxyacid dehydrogenase SSP0606 (318 aa).

Residues 156 to 157 (EI), 235 to 237 (ASR), and Asp-261 contribute to the NAD(+) site. Arg-237 is an active-site residue. Residue Glu-266 is part of the active site. The active-site Proton donor is His-284. 284 to 287 (HIGN) lines the NAD(+) pocket.

It belongs to the D-isomer specific 2-hydroxyacid dehydrogenase family.

The sequence is that of Putative 2-hydroxyacid dehydrogenase SSP0606 from Staphylococcus saprophyticus subsp. saprophyticus (strain ATCC 15305 / DSM 20229 / NCIMB 8711 / NCTC 7292 / S-41).